We begin with the raw amino-acid sequence, 676 residues long: Urocanate hydratase (676 aa).

Residues 126-127, Q204, 251-253, E271, 317-318, 343-347, 354-355, and Y403 contribute to the NAD(+) site; these read GG, GMS, NV, QTSCH, and YY. K534 is modified (N6-succinyllysine). G594 is a binding site for NAD(+).

This sequence belongs to the urocanase family. Requires NAD(+) as cofactor.

The enzyme catalyses 4-imidazolone-5-propanoate = trans-urocanate + H2O. Its pathway is amino-acid degradation; L-histidine degradation into L-glutamate; N-formimidoyl-L-glutamate from L-histidine: step 2/3. The protein is Urocanate hydratase (Uroc1) of Mus musculus (Mouse).